The primary structure comprises 392 residues: MADTPSVAVQAPPGYGKTELFHLPLIALASKGDVKYVSFLFVPYTVLLANCMIRLGRRGCLNVAPVRNFIEEGYDGVTDLYVGIYDDLASTNFTDRIAAWENIVECTFRTNNVKLGYLIVDEFHNFETEVYRQSQFGGITNLDFDAFEKAIFLSGTAPEAVADAALQRIGLTGLAKKSMDINELKRSEDLSRGLSSYPTRMFNLIKEKSEVPLGHVHKIWKKVESQPEEALKLLLALFEIEPESKAIVVASTTNEVEELACSWRKYFRVVWIHGKLGAAEKVSRTKEFVTDGSMQVLIGTKLVTEGIDIKQLMMVIMLDNRLNIIELIQGVGRLRDGGLCYLLSRKNSWAARNRKGELPPIKEGCITEQVREFYGLESKKGKKGQHVGCCVC.

Residues 1 to 175 (MADTPSVAVQ…LQRIGLTGLA (175 aa)) enclose the Helicase ATP-binding domain. 11–18 (APPGYGKT) contacts ATP. The 150-residue stretch at 232–381 (KLLLALFEIE…EFYGLESKKG (150 aa)) folds into the Helicase C-terminal domain.

This sequence belongs to the helicase family. Yeast subtelomeric Y' repeat subfamily.

Its function is as follows. Catalyzes DNA unwinding and is involved in telomerase-independent telomere maintenance. The polypeptide is Y' element ATP-dependent helicase YFL066C (Saccharomyces cerevisiae (strain ATCC 204508 / S288c) (Baker's yeast)).